The following is a 509-amino-acid chain: Cytochrome P450 monooxygenase ARMGADRAFT_974139 (509 aa).

The helical transmembrane segment at 4 to 24 (ASLAVVVWAILLVLWLRRIFG) threads the bilayer. Residues Asn-96 and Asn-279 are each glycosylated (N-linked (GlcNAc...) asparagine). Cys-439 is a heme binding site.

This sequence belongs to the cytochrome P450 family. Requires heme as cofactor.

It localises to the membrane. Its pathway is secondary metabolite biosynthesis. In terms of biological role, cytochrome P450 monooxygenase, part of the gene cluster that mediates the biosynthesis of melleolides, a range of antifungal and phytotoxic polyketide derivatives composed of an orsellinic acid (OA) moiety esterified to various sesquiterpene alcohols. The first step in melleolides biosynthesis is performed by the delta(6)-protoilludene synthase PRO1 which catalyzes the cyclization of farnesyl diphosphate to protoilludene. The orsellinic acid synthase armB produces OA by condensing acetyl-CoA with 3 malonyl-CoA units in a three-round chain elongation reaction folowed by a C2-C7 ring closure. ArmB further catalyzes the trans-esterification of OA to the various sesquiterpene alcohols resulting from the hydroxylation of protoilludene. The melleolides cluster also includes 5 cytochrome P450 monooxygenases, 4 NAD(+)-dependent oxidoreductases, one flavin-dependent oxidoreductase, and one O-methyltransferase. The cytochrome P450 monooxygenases may be involved in protoilludene hydroxylation to elaborate melleolides with multiple alcohol groups, such as melleolide D, which carries alcohol functionalities at C-4, C-5, C-10, and C-13. The role of the NAD(+)-dependent enzymes remains unknown. Numerous melleolides, including arnamial, show 5'-O-methylation of the aromatic moiety which may be catalyzed by the methyltransferase encoded in the cluster. The flavin-dependent oxidoreductase might represent the dehydrogenase yielding the aldehyde in position 1 of arnamial and other melleolides. Finally, several halogenase localized outside of the cluster, are able to catalyze the transfer of a single chlorine atom to the melleolide backbone, resulting in a 6'-chloromelleolide product. The chain is Cytochrome P450 monooxygenase ARMGADRAFT_974139 from Armillaria gallica (Bulbous honey fungus).